Reading from the N-terminus, the 422-residue chain is UDP-N-acetylglucosamine 1-carboxyvinyltransferase 2 (422 aa).

22–23 (KN) contacts phosphoenolpyruvate. Arginine 93 provides a ligand contact to UDP-N-acetyl-alpha-D-glucosamine. Cysteine 117 serves as the catalytic Proton donor. Residue cysteine 117 is modified to 2-(S-cysteinyl)pyruvic acid O-phosphothioketal. UDP-N-acetyl-alpha-D-glucosamine-binding positions include 122–126 (RPVDL), aspartate 308, and isoleucine 330.

The protein belongs to the EPSP synthase family. MurA subfamily.

It is found in the cytoplasm. The catalysed reaction is phosphoenolpyruvate + UDP-N-acetyl-alpha-D-glucosamine = UDP-N-acetyl-3-O-(1-carboxyvinyl)-alpha-D-glucosamine + phosphate. It participates in cell wall biogenesis; peptidoglycan biosynthesis. Its function is as follows. Cell wall formation. Adds enolpyruvyl to UDP-N-acetylglucosamine. This is UDP-N-acetylglucosamine 1-carboxyvinyltransferase 2 from Legionella pneumophila (strain Lens).